The primary structure comprises 322 residues: Tyrosine recombinase XerC (322 aa).

Positions 1–25 are disordered; the sequence is MPEAAPPVADARGSSPTATTGPGAD. The segment covering 16-25 has biased composition (low complexity); it reads PTATTGPGAD. Residues 25–111 form the Core-binding (CB) domain; it reads DATLSAVEPF…ACRSYYAWLL (87 aa). The Tyr recombinase domain maps to 132 to 309; it reads KLPQVLDADE…DFQHLAKVYD (178 aa). Active-site residues include arginine 171, lysine 195, histidine 261, arginine 264, and histidine 287. Tyrosine 296 serves as the catalytic O-(3'-phospho-DNA)-tyrosine intermediate.

Belongs to the 'phage' integrase family. XerC subfamily. In terms of assembly, forms a cyclic heterotetrameric complex composed of two molecules of XerC and two molecules of XerD.

It is found in the cytoplasm. In terms of biological role, site-specific tyrosine recombinase, which acts by catalyzing the cutting and rejoining of the recombining DNA molecules. The XerC-XerD complex is essential to convert dimers of the bacterial chromosome into monomers to permit their segregation at cell division. It also contributes to the segregational stability of plasmids. The protein is Tyrosine recombinase XerC of Xanthomonas campestris pv. campestris (strain 8004).